An 89-amino-acid polypeptide reads, in one-letter code: Small ribosomal subunit protein uS15 (89 aa).

The protein belongs to the universal ribosomal protein uS15 family. Part of the 30S ribosomal subunit. Forms a bridge to the 50S subunit in the 70S ribosome, contacting the 23S rRNA.

In terms of biological role, one of the primary rRNA binding proteins, it binds directly to 16S rRNA where it helps nucleate assembly of the platform of the 30S subunit by binding and bridging several RNA helices of the 16S rRNA. Forms an intersubunit bridge (bridge B4) with the 23S rRNA of the 50S subunit in the ribosome. This chain is Small ribosomal subunit protein uS15, found in Kocuria rhizophila (strain ATCC 9341 / DSM 348 / NBRC 103217 / DC2201).